Reading from the N-terminus, the 315-residue chain is MQNLHIKRPLEPKQAFQYRGRFAPSPSGLLHFGSLIAALASFLDAKAFVNDHGEQGKWLIRIEDIDRPREQKGASTAILTTLEAFGLHWDETALYQSTQSQYYRDILSNLAQQKLSYYCQCTRSQIKAIGGIYQGHCRTANYKSQGNATRLVNQYGLHQFNDLFQDHVVCNKALANEDFIIHRKDGLFAYQLAVVADDIAQGITHVVRGCDLLEPTARQLTLFQTLNNSFLKCTTPRYGHIPLAITSEGYKLSKQNKAPAINNANPQPALIAALIFLGQKSIPDLVSASVEEIIQWAITHWQRDLVPKAFEINID.

L-glutamate is bound by residues Arg-21–Ser-25 and Glu-63. The 'HIGH' region signature appears at Pro-24–Ser-34. 4 residues coordinate Zn(2+): Cys-119, Cys-121, Tyr-133, and Cys-137. The L-glutamate site is built by Tyr-190 and Arg-208. The short motif at Lys-251 to Gln-255 is the 'KMSKS' region element. Lys-254 lines the ATP pocket.

It belongs to the class-I aminoacyl-tRNA synthetase family. GluQ subfamily. The cofactor is Zn(2+).

In terms of biological role, catalyzes the tRNA-independent activation of glutamate in presence of ATP and the subsequent transfer of glutamate onto a tRNA(Asp). Glutamate is transferred on the 2-amino-5-(4,5-dihydroxy-2-cyclopenten-1-yl) moiety of the queuosine in the wobble position of the QUC anticodon. This Colwellia psychrerythraea (strain 34H / ATCC BAA-681) (Vibrio psychroerythus) protein is Glutamyl-Q tRNA(Asp) synthetase.